The primary structure comprises 1402 residues: DNA-directed RNA polymerase subunit beta' (1402 aa).

Zn(2+) contacts are provided by cysteine 71, cysteine 73, cysteine 86, and cysteine 89. The Mg(2+) site is built by aspartate 462, aspartate 464, and aspartate 466. Residues cysteine 811, cysteine 885, cysteine 892, and cysteine 895 each contribute to the Zn(2+) site.

The protein belongs to the RNA polymerase beta' chain family. The RNAP catalytic core consists of 2 alpha, 1 beta, 1 beta' and 1 omega subunit. When a sigma factor is associated with the core the holoenzyme is formed, which can initiate transcription. Mg(2+) is required as a cofactor. It depends on Zn(2+) as a cofactor.

The enzyme catalyses RNA(n) + a ribonucleoside 5'-triphosphate = RNA(n+1) + diphosphate. Its function is as follows. DNA-dependent RNA polymerase catalyzes the transcription of DNA into RNA using the four ribonucleoside triphosphates as substrates. The sequence is that of DNA-directed RNA polymerase subunit beta' from Bartonella henselae (strain ATCC 49882 / DSM 28221 / CCUG 30454 / Houston 1) (Rochalimaea henselae).